The sequence spans 128 residues: 3-aminoacrylate deaminase RutC (128 aa).

Belongs to the RutC family.

The enzyme catalyses (Z)-3-aminoacrylate + H2O + H(+) = 3-oxopropanoate + NH4(+). Functionally, involved in pyrimidine catabolism. Catalyzes the deamination of 3-aminoacrylate to malonic semialdehyde, a reaction that can also occur spontaneously. RutC may facilitate the reaction and modulate the metabolic fitness, rather than catalyzing essential functions. The sequence is that of 3-aminoacrylate deaminase RutC from Enterobacter cloacae subsp. cloacae (strain ATCC 13047 / DSM 30054 / NBRC 13535 / NCTC 10005 / WDCM 00083 / NCDC 279-56).